We begin with the raw amino-acid sequence, 596 residues long: ATP-dependent lipid A-core flippase (596 aa).

6 consecutive transmembrane segments (helical) span residues 34–54 (VWVLVAGVLAMAAVAATEAGI), 80–100 (AAVVGLALARAIAQYASGYLL), 138–158 (AVVFEVNQVLSVLMGVTITLV), 164–184 (VVFLLGYLFYLNWRLTLIVAI), 263–283 (QPLTQFLASIALAVVLTIAVV), and 292–312 (VGGFVAFVTAMLLIISPLKHL). Positions 38–321 (VAGVLAMAAV…LMDVNQPLQR (284 aa)) constitute an ABC transmembrane type-1 domain. Residues 353 to 589 (IEFSHVSFSY…GGLYAHLHRI (237 aa)) form the ABC transporter domain. 389 to 396 (GPSGSGKT) contacts ATP.

This sequence belongs to the ABC transporter superfamily. Lipid exporter (TC 3.A.1.106) family. As to quaternary structure, homodimer.

Its subcellular location is the cell inner membrane. The enzyme catalyses ATP + H2O + lipid A-core oligosaccharideSide 1 = ADP + phosphate + lipid A-core oligosaccharideSide 2.. Functionally, involved in lipopolysaccharide (LPS) biosynthesis. Translocates lipid A-core from the inner to the outer leaflet of the inner membrane. Transmembrane domains (TMD) form a pore in the inner membrane and the ATP-binding domain (NBD) is responsible for energy generation. The sequence is that of ATP-dependent lipid A-core flippase from Burkholderia mallei (strain ATCC 23344).